Reading from the N-terminus, the 1593-residue chain is Nischarin (1593 aa).

The necessary for binding to phosphoinositide-3-P; not sufficient for targeting to endosomes stretch occupies residues 1-134; sequence MAAATLSFGP…GVTAALAEEL (134 aa). Residues 12–122 form the PX domain; that stretch reads REAEPAKEAR…AHFLHFHLYE (111 aa). A necessary for homooligomerization and targeting to endosomes region spans residues 121–695; it reads YEVNGVTAAL…ERLALEWALG (575 aa). Residues 246–869 are interaction with PAK1; that stretch reads MSVRFSATSM…LVYSDKRMVQ (624 aa). LRR repeat units lie at residues 290–311, 313–334, 335–356, 358–379, 380–401, and 405–426; these read ALTTLDLSHNSICEIDESVKLI, KIEYLDLSHNGLRVVDNLQHLY, NLVHLDLSYNKLSSLEGVHTKL, NVKTLNLAGNFLESLSGLHKLY, SLVNVDLRDNRIEQLDEVKSIG, and CLERLTLLNNPLSIIPDYRTKV. Positions 466–480 are enriched in basic and acidic residues; sequence SKLSNTEKKAGEDFR. The disordered stretch occupies residues 466 to 499; sequence SKLSNTEKKAGEDFRLPPAPCIRPGGSPPAAPAS. The segment covering 482 to 496 has biased composition (pro residues); that stretch reads PPAPCIRPGGSPPAA. A phosphoserine mark is found at S543, S545, and S548. Positions 624-694 form a coiled coil; it reads IEAANQREEA…EERLALEWAL (71 aa). A disordered region spans residues 629–687; the sequence is QREEAHGEQGEEEEEEEEEEDVAENRYFEMGPPDAEEEEGSGQGEEDEEDEDEEAEEER. 2 stretches are compositionally biased toward acidic residues: residues 638 to 650 and 662 to 685; these read GEEEEEEEEEEDV and DAEEEEGSGQGEEDEEDEDEEAEE. The interval 661-869 is interaction with LIMK; sequence PDAEEEEGSG…LVYSDKRMVQ (209 aa). Positions 709–807 are interaction with ITGA5; the sequence is KVLWCFLIHV…ANLHEFHADL (99 aa). The segment at 1016–1185 is disordered; sequence NPSAKPRNQP…PAGGPAPAEA (170 aa). 2 stretches are compositionally biased toward low complexity: residues 1038–1069 and 1081–1158; these read ETPADAPAPAAVPPTASAPAPAEALAPDLAPV and AEAP…APAP. 10 consecutive repeat copies span residues 1081–1086, 1087–1092, 1093–1098, 1099–1104, 1105–1110, 1111–1116, 1123–1128, 1129–1134, 1135–1140, and 1141–1146. The interval 1081–1146 is 10 X 6 AA tandem repeat of A-E-A-P-A-A; that stretch reads AEAPAAAEAP…APAAAEAPAA (66 aa). Residues 1159–1179 are compositionally biased toward pro residues; that stretch reads NQAPAPARGPAPARGPAPAGG. At T1371 the chain carries Phosphothreonine. S1373 bears the Phosphoserine mark.

Homooligomer. Interacts with GRB2. Interacts with PIK3R1; probably associates with the PI3-kinase complex. Interacts with IRS4. Found in a complex with ITGA5 and PAK1. Found in a complex with LIMK1 and PAK1. Interacts with ITGA5 (via cytoplasmic domain); this interaction is direct. Interacts with PAK1 (via kinase domain); this interaction is direct and is increased upon activation of PAK1. Interacts with LIMK1 (via PDZ and kinase domain); this interaction is direct. Interacts with LIMK2; this interaction depends on LIMK2 activity. Interacts with RAC1 (activated state). Interacts with STK11; this interaction may increase STK11 activity. Highly expressed in brain and kidney. Moderately expressed in heart, liver, lung and skeletal muscle. Not detected in spleen and testis.

Its subcellular location is the cell membrane. It is found in the cytoplasm. It localises to the early endosome. The protein localises to the recycling endosome. Functionally, acts either as the functional imidazoline-1 receptor (I1R) candidate or as a membrane-associated mediator of the I1R signaling. Binds numerous imidazoline ligands that induces initiation of cell-signaling cascades triggering to cell survival, growth and migration. Its activation by the agonist rilmenidine induces an increase in phosphorylation of mitogen-activated protein kinases MAPK1 and MAPK3 in rostral ventrolateral medulla (RVLM) neurons that exhibited rilmenidine-evoked hypotension. Blocking its activation with efaroxan abolished rilmenidine-induced mitogen-activated protein kinase phosphorylation in RVLM neurons. Acts as a modulator of Rac-regulated signal transduction pathways. Suppresses Rac1-stimulated cell migration by interacting with PAK1 and inhibiting its kinase activity. Also blocks Pak-independent Rac signaling by interacting with RAC1 and inhibiting Rac1-stimulated NF-kB response element and cyclin D1 promoter activation. Also inhibits LIMK1 kinase activity by reducing LIMK1 'Tyr-508' phosphorylation. Inhibits Rac-induced cell migration and invasion in breast and colon epithelial cells. Inhibits lamellipodia formation, when overexpressed. Plays a role in protection against apoptosis. Involved in association with IRS4 in the enhancement of insulin activation of MAPK1 and MAPK3. When overexpressed, induces a redistribution of cell surface ITGA5 integrin to intracellular endosomal structures. The sequence is that of Nischarin (Nisch) from Mus musculus (Mouse).